Here is a 436-residue protein sequence, read N- to C-terminus: Small ribosomal subunit protein uS5m (436 aa).

The 67-residue stretch at 152–218 folds into the S5 DRBM domain; the sequence is FETYCLEVKR…GMASRKLFHV (67 aa). A disordered region spans residues 417–436; the sequence is GVEPMPLGIGLSHVVPKKDD.

This sequence belongs to the universal ribosomal protein uS5 family. In terms of assembly, component of the mitochondrial ribosome small subunit (28S) which comprises a 12S rRNA and about 30 distinct proteins.

It is found in the mitochondrion. The sequence is that of Small ribosomal subunit protein uS5m (mrps-5) from Caenorhabditis elegans.